The chain runs to 306 residues: D-alanine--D-alanine ligase (306 aa).

Positions 101 to 303 (KYLWQGCGLP…FSQLVARILE (203 aa)) constitute an ATP-grasp domain. 134 to 189 (IDALGLPLFVKPSREGSSVGISRVNQASELQAALQEAFRFDDEVLVEAFLSGPEYT) lines the ATP pocket. Mg(2+) is bound by residues D257, E270, and N272.

Belongs to the D-alanine--D-alanine ligase family. Mg(2+) serves as cofactor. It depends on Mn(2+) as a cofactor.

It localises to the cytoplasm. It catalyses the reaction 2 D-alanine + ATP = D-alanyl-D-alanine + ADP + phosphate + H(+). The protein operates within cell wall biogenesis; peptidoglycan biosynthesis. Its function is as follows. Cell wall formation. This chain is D-alanine--D-alanine ligase, found in Erwinia tasmaniensis (strain DSM 17950 / CFBP 7177 / CIP 109463 / NCPPB 4357 / Et1/99).